A 153-amino-acid chain; its full sequence is uncharacterized protein (153 aa).

A run of 2 helical transmembrane segments spans residues 16-36 and 97-117; these read ILACLLLIFLMATIFLLILEI and ALTTTLSIILLVCIIMACIIC.

The protein localises to the membrane. This is an uncharacterized protein from Human herpesvirus 6A (strain Uganda-1102) (HHV-6 variant A).